Reading from the N-terminus, the 246-residue chain is uncharacterized protein (246 aa).

Ser-194 carries the phosphoserine modification.

This is an uncharacterized protein from Schizosaccharomyces pombe (strain 972 / ATCC 24843) (Fission yeast).